A 419-amino-acid polypeptide reads, in one-letter code: Tyrosine--tRNA ligase (419 aa).

Y34 contacts L-tyrosine. The short motif at 39–48 (PSGDSMHIGH) is the 'HIGH' region element. Residues Y168 and Q172 each contribute to the L-tyrosine site. A 'KMSKS' region motif is present at residues 230-234 (KFGKS). Residue K233 participates in ATP binding. Residues 352–418 (ANLVDWLVTL…GKKKYFLVSY (67 aa)) enclose the S4 RNA-binding domain.

The protein belongs to the class-I aminoacyl-tRNA synthetase family. TyrS type 1 subfamily. As to quaternary structure, homodimer.

The protein resides in the cytoplasm. The enzyme catalyses tRNA(Tyr) + L-tyrosine + ATP = L-tyrosyl-tRNA(Tyr) + AMP + diphosphate + H(+). Catalyzes the attachment of tyrosine to tRNA(Tyr) in a two-step reaction: tyrosine is first activated by ATP to form Tyr-AMP and then transferred to the acceptor end of tRNA(Tyr). This chain is Tyrosine--tRNA ligase, found in Listeria monocytogenes serotype 4b (strain F2365).